The chain runs to 407 residues: 1-deoxy-D-xylulose 5-phosphate reductoisomerase (407 aa).

Residues threonine 25, glycine 26, serine 27, isoleucine 28, asparagine 53, and asparagine 136 each contribute to the NADPH site. Position 137 (lysine 137) interacts with 1-deoxy-D-xylulose 5-phosphate. Glutamate 138 is an NADPH binding site. Aspartate 162 contributes to the Mn(2+) binding site. The 1-deoxy-D-xylulose 5-phosphate site is built by serine 163, glutamate 164, serine 188, and histidine 211. Position 164 (glutamate 164) interacts with Mn(2+). Glycine 217 lines the NADPH pocket. 1-deoxy-D-xylulose 5-phosphate-binding residues include serine 224, asparagine 229, lysine 230, and glutamate 233. Glutamate 233 contributes to the Mn(2+) binding site.

The protein belongs to the DXR family. The cofactor is Mg(2+). It depends on Mn(2+) as a cofactor.

The enzyme catalyses 2-C-methyl-D-erythritol 4-phosphate + NADP(+) = 1-deoxy-D-xylulose 5-phosphate + NADPH + H(+). Its pathway is isoprenoid biosynthesis; isopentenyl diphosphate biosynthesis via DXP pathway; isopentenyl diphosphate from 1-deoxy-D-xylulose 5-phosphate: step 1/6. Catalyzes the NADPH-dependent rearrangement and reduction of 1-deoxy-D-xylulose-5-phosphate (DXP) to 2-C-methyl-D-erythritol 4-phosphate (MEP). This Nitrobacter winogradskyi (strain ATCC 25391 / DSM 10237 / CIP 104748 / NCIMB 11846 / Nb-255) protein is 1-deoxy-D-xylulose 5-phosphate reductoisomerase.